A 238-amino-acid polypeptide reads, in one-letter code: UPF0280 protein Msm_0088 (238 aa).

This sequence belongs to the UPF0280 family.

This chain is UPF0280 protein Msm_0088, found in Methanobrevibacter smithii (strain ATCC 35061 / DSM 861 / OCM 144 / PS).